We begin with the raw amino-acid sequence, 291 residues long: Lipoyl synthase, mitochondrial (291 aa).

Cysteine 45, cysteine 50, cysteine 56, cysteine 71, cysteine 75, cysteine 78, and serine 283 together coordinate [4Fe-4S] cluster. One can recognise a Radical SAM core domain in the interval 57-272 (WGEGTATFMI…EKIGKELGFR (216 aa)).

It belongs to the radical SAM superfamily. Lipoyl synthase family. It depends on [4Fe-4S] cluster as a cofactor.

It localises to the mitochondrion. The catalysed reaction is [[Fe-S] cluster scaffold protein carrying a second [4Fe-4S](2+) cluster] + N(6)-octanoyl-L-lysyl-[protein] + 2 oxidized [2Fe-2S]-[ferredoxin] + 2 S-adenosyl-L-methionine + 4 H(+) = [[Fe-S] cluster scaffold protein] + N(6)-[(R)-dihydrolipoyl]-L-lysyl-[protein] + 4 Fe(3+) + 2 hydrogen sulfide + 2 5'-deoxyadenosine + 2 L-methionine + 2 reduced [2Fe-2S]-[ferredoxin]. It participates in protein modification; protein lipoylation via endogenous pathway; protein N(6)-(lipoyl)lysine from octanoyl-[acyl-carrier-protein]: step 2/2. Functionally, catalyzes the radical-mediated insertion of two sulfur atoms into the C-6 and C-8 positions of the octanoyl moiety bound to the lipoyl domains of lipoate-dependent enzymes, thereby converting the octanoylated domains into lipoylated derivatives. In Nematostella vectensis (Starlet sea anemone), this protein is Lipoyl synthase, mitochondrial.